The following is a 154-amino-acid chain: Metallothiol transferase FosB (154 aa).

Residues 8 to 123 (GINHLLFSVS…DGHKFELHTG (116 aa)) enclose the VOC domain. The Mg(2+) site is built by His11, His70, and Glu119. Glu119 serves as the catalytic Proton donor/acceptor.

The protein belongs to the fosfomycin resistance protein family. FosB subfamily. As to quaternary structure, homodimer. Mg(2+) serves as cofactor.

The protein localises to the cytoplasm. In terms of biological role, metallothiol transferase which confers resistance to fosfomycin by catalyzing the addition of a thiol cofactor to fosfomycin. L-cysteine is probably the physiological thiol donor. This Bacillus licheniformis (strain ATCC 14580 / DSM 13 / JCM 2505 / CCUG 7422 / NBRC 12200 / NCIMB 9375 / NCTC 10341 / NRRL NRS-1264 / Gibson 46) protein is Metallothiol transferase FosB.